Consider the following 358-residue polypeptide: Neutral protease 2 homolog PABG_02362 (358 aa).

The N-terminal stretch at 1–19 (MRRVSGILAVAAFTISAFA) is a signal peptide. A propeptide spanning residues 20-182 (GVIQPVAKDA…FAAMNQFVKI (163 aa)) is cleaved from the precursor. 2 disulfide bridges follow: C188–C259 and C266–C284. An N-linked (GlcNAc...) asparagine glycan is attached at N249. H309 serves as a coordination point for Zn(2+). Residue E310 is part of the active site. The Zn(2+) site is built by H313 and D324.

Belongs to the peptidase M35 family. Zn(2+) is required as a cofactor.

Its subcellular location is the secreted. It catalyses the reaction Preferential cleavage of bonds with hydrophobic residues in P1'. Also 3-Asn-|-Gln-4 and 8-Gly-|-Ser-9 bonds in insulin B chain.. Secreted metalloproteinase that allows assimilation of proteinaceous substrates. Shows high activities on basic nuclear substrates such as histone and protamine. This Paracoccidioides brasiliensis (strain Pb03) protein is Neutral protease 2 homolog PABG_02362.